A 151-amino-acid polypeptide reads, in one-letter code: Ribosomal RNA large subunit methyltransferase H (151 aa).

Residues Gly100 and Leu119–Phe124 contribute to the S-adenosyl-L-methionine site.

The protein belongs to the RNA methyltransferase RlmH family. In terms of assembly, homodimer.

The protein localises to the cytoplasm. It carries out the reaction pseudouridine(1915) in 23S rRNA + S-adenosyl-L-methionine = N(3)-methylpseudouridine(1915) in 23S rRNA + S-adenosyl-L-homocysteine + H(+). Its function is as follows. Specifically methylates the pseudouridine at position 1915 (m3Psi1915) in 23S rRNA. The sequence is that of Ribosomal RNA large subunit methyltransferase H from Thermotoga neapolitana (strain ATCC 49049 / DSM 4359 / NBRC 107923 / NS-E).